The sequence spans 235 residues: Sugar fermentation stimulation protein homolog (235 aa).

This sequence belongs to the SfsA family.

The protein is Sugar fermentation stimulation protein homolog of Maricaulis maris (strain MCS10) (Caulobacter maris).